A 319-amino-acid polypeptide reads, in one-letter code: Replication factor C small subunit (319 aa).

45–52 (GPPGTGKT) contributes to the ATP binding site.

Belongs to the activator 1 small subunits family. RfcS subfamily. As to quaternary structure, heteropentamer composed of four small subunits (RfcS) and one large subunit (RfcL). Both subunits interact with PCNA.

Part of the RFC clamp loader complex which loads the PCNA sliding clamp onto DNA. The complex possesses DNA-dependent ATPase activity which is further stimulated by PCNA. The sequence is that of Replication factor C small subunit (rfcS) from Archaeoglobus fulgidus (strain ATCC 49558 / DSM 4304 / JCM 9628 / NBRC 100126 / VC-16).